We begin with the raw amino-acid sequence, 381 residues long: tRNA pseudouridine synthase D (381 aa).

Aspartate 81 (nucleophile) is an active-site residue. The TRUD domain occupies 160-335 (GMPNYFGSQR…TLGSRRFFWV (176 aa)).

It belongs to the pseudouridine synthase TruD family.

The catalysed reaction is uridine(13) in tRNA = pseudouridine(13) in tRNA. Responsible for synthesis of pseudouridine from uracil-13 in transfer RNAs. The protein is tRNA pseudouridine synthase D of Helicobacter pylori (strain J99 / ATCC 700824) (Campylobacter pylori J99).